The following is a 598-amino-acid chain: Fibulin-1 (598 aa).

Intrachain disulfides connect A1–C25, C7–C26, C28–C52, C29–C59, C42–C60, C96–C106, C102–C115, C117–C130, C136–C149, C143–C158, C164–C176, C182–C195, C189–C204, C210–C222, C228–C242, C257–C270, C275–C288, C282–C297, C299–C312, C318–C330, C326–C339, C341–C354, C360–C369, C365–C378, C380–C394, C400–C413, C409–C422, C424–C438, C444–C457, C451–C466, and C471–C483. 2 consecutive Anaphylatoxin-like domains span residues 1-27 (ANEQ…RCCH) and 28-60 (CCLL…RACC). N-linked (GlcNAc...) asparagine glycosylation occurs at N14. An EGF-like 1 domain is found at 92–131 (LNDRCRGGGPCKQQCRDTGDEVVCSCFVGYQLLSDGVSCE). The EGF-like 2; calcium-binding domain maps to 132 to 177 (DVNECITGSHSCRLGESCINTVGSFRCQRDSSCGTGYELTEDNSCK). Positions 178–223 (DIDQCESGIHNCLPDFICQNTLGSFRCRPKLQCKNGFIQDALANCI) constitute an EGF-like 3; calcium-binding domain. Positions 224–270 (DINECLSIVSAPCPTGHTCINTEGSYTQKNVPNCGRGYHLNEEGTRC) constitute an EGF-like 4; calcium-binding domain. An EGF-like 5; calcium-binding domain is found at 271–313 (DVNECAPPAEPCGKGHRCVNSPGSFRCECKTGYYFDGISRMCV). Residues 271–355 (DVNECAPPAE…RLSVDGRSCE (85 aa)) form a self-association and FN1-binding region. The EGF-like 6; calcium-binding domain maps to 314–355 (DVNECQRYPGRLCGHKCENTLGSYVCSCSVGFRLSVDGRSCE). One can recognise an EGF-like 7; calcium-binding domain in the interval 356–395 (DINECSSSPCSQECANVYGSYQCYCRRGYQLSDVDGVTCE). In terms of domain architecture, EGF-like 8; calcium-binding spans 396–439 (DIDECALPTGGHICSYRCINIPGSFQCSCPASGYRLAPNGRNCQ). In terms of domain architecture, EGF-like 9; calcium-binding spans 440–484 (DIDECVTGIHNCSINETCFNIQGGFRCLAFECPENYRRSAATRCE). N-linked (GlcNAc...) asparagine glycans are attached at residues N450 and N454.

Belongs to the fibulin family. Homomultimerizes and interacts with various extracellular matrix components. Interacts with FBLN7. Interacts with the mature/soluble form of DTR. Interacts with CCN3.

It is found in the secreted. Its subcellular location is the extracellular space. It localises to the extracellular matrix. Incorporated into fibronectin-containing matrix fibers. May play a role in cell adhesion and migration along protein fibers within the extracellular matrix (ECM). Could be important for certain developmental processes and contribute to the supramolecular organization of ECM architecture, in particular to those of basement membranes. May serve to anchor the mature/soluble form of DTR to its fibers as it migrates through the extracellular matrix. The direct physical association with DTR may be useful in such tissue developmental processes as wound healing. The chain is Fibulin-1 (FBLN1) from Chlorocebus aethiops (Green monkey).